The following is a 280-amino-acid chain: uncharacterized protein (280 aa).

This sequence belongs to the eukaryotic-type primase small subunit family.

This is an uncharacterized protein from Archaeoglobus fulgidus (strain ATCC 49558 / DSM 4304 / JCM 9628 / NBRC 100126 / VC-16).